The sequence spans 269 residues: Protein OPG079 (269 aa).

Belongs to the orthopoxvirus OPG079 family. Homoomultimer (Potential). Interacts with the small subunit of ribonucleotide reductase.

The protein resides in the host cytoplasm. Functionally, plays an essential role in viral DNA replication. Binds to ssDNA with high affinity and localizes to cytoplasmic factories where nascent viral genomes accumulate. May disrupt loops, hairpins and other secondary structures present on ssDNA to reduce and eliminate pausing of viral DNA polymerase at specific sites during elongation. The polypeptide is Protein OPG079 (OPG079) (Cynomys gunnisoni (Gunnison's prairie dog)).